The following is a 100-amino-acid chain: Integration host factor subunit alpha (100 aa).

It belongs to the bacterial histone-like protein family. Heterodimer of an alpha and a beta chain.

Functionally, this protein is one of the two subunits of integration host factor, a specific DNA-binding protein that functions in genetic recombination as well as in transcriptional and translational control. In Jannaschia sp. (strain CCS1), this protein is Integration host factor subunit alpha.